The chain runs to 474 residues: uncharacterized protein (474 aa).

A helical membrane pass occupies residues 374 to 398 (GLICYLALFSISLMIENIIGLTISL).

Its subcellular location is the membrane. This is an uncharacterized protein from Borreliella burgdorferi (strain ATCC 35210 / DSM 4680 / CIP 102532 / B31) (Borrelia burgdorferi).